The following is a 415-amino-acid chain: Adenosylhomocysteinase (415 aa).

Substrate-binding residues include Thr-53, Asp-124, and Glu-147. Residue 148 to 150 (TTT) coordinates NAD(+). Positions 177 and 181 each coordinate substrate. Residues Asn-182, 211 to 216 (GYGWVG), Glu-234, Asn-269, 290 to 292 (SGH), and Asn-337 contribute to the NAD(+) site.

Belongs to the adenosylhomocysteinase family. Requires NAD(+) as cofactor.

It is found in the cytoplasm. It catalyses the reaction S-adenosyl-L-homocysteine + H2O = L-homocysteine + adenosine. Its pathway is amino-acid biosynthesis; L-homocysteine biosynthesis; L-homocysteine from S-adenosyl-L-homocysteine: step 1/1. May play a key role in the regulation of the intracellular concentration of adenosylhomocysteine. This Sulfurisphaera tokodaii (strain DSM 16993 / JCM 10545 / NBRC 100140 / 7) (Sulfolobus tokodaii) protein is Adenosylhomocysteinase.